A 124-amino-acid polypeptide reads, in one-letter code: Small ribosomal subunit protein uS12 (124 aa).

The interval 1 to 20 (MATISQLVRNPRKDKVQKTS) is disordered. 3-methylthioaspartic acid is present on Asp-89. Residues 104–124 (TSGVTARRKGRSKYGAKRPKA) are disordered. Basic residues predominate over residues 109 to 124 (ARRKGRSKYGAKRPKA).

The protein belongs to the universal ribosomal protein uS12 family. Part of the 30S ribosomal subunit. Contacts proteins S8 and S17. May interact with IF1 in the 30S initiation complex.

Its function is as follows. With S4 and S5 plays an important role in translational accuracy. In terms of biological role, interacts with and stabilizes bases of the 16S rRNA that are involved in tRNA selection in the A site and with the mRNA backbone. Located at the interface of the 30S and 50S subunits, it traverses the body of the 30S subunit contacting proteins on the other side and probably holding the rRNA structure together. The combined cluster of proteins S8, S12 and S17 appears to hold together the shoulder and platform of the 30S subunit. In Psychromonas ingrahamii (strain DSM 17664 / CCUG 51855 / 37), this protein is Small ribosomal subunit protein uS12.